The following is a 324-amino-acid chain: Protoheme IX farnesyltransferase (324 aa).

Helical transmembrane passes span 31 to 51 (LIVLFLITTAAGMWVAARGEV), 53 to 73 (PVLALITLLTGAMAAGSANTI), 104 to 124 (LVFAIALAVGAFSLQTLCANL), 125 to 145 (LSACLEMAGIAVYVGVYTHWL), 153 to 173 (IVIGGAAGAIPPLVGWAAVTG), 181 to 201 (VLFAIIFIWTPPHFWPLAMLI), 222 to 242 (TAWQIFGYTLVLLPTTLLLVY), 243 to 263 (PLHACGLIYGAIALVLGVVFI), and 285 to 305 (FSILYMMILCAAMGIDSLPLT).

This sequence belongs to the UbiA prenyltransferase family. Protoheme IX farnesyltransferase subfamily.

The protein localises to the cell inner membrane. The catalysed reaction is heme b + (2E,6E)-farnesyl diphosphate + H2O = Fe(II)-heme o + diphosphate. It participates in porphyrin-containing compound metabolism; heme O biosynthesis; heme O from protoheme: step 1/1. Functionally, converts heme B (protoheme IX) to heme O by substitution of the vinyl group on carbon 2 of heme B porphyrin ring with a hydroxyethyl farnesyl side group. In Cyanothece sp. (strain PCC 7425 / ATCC 29141), this protein is Protoheme IX farnesyltransferase.